A 537-amino-acid polypeptide reads, in one-letter code: MFS-type transporter qa-x (537 aa).

The Cytoplasmic portion of the chain corresponds to Met1–Ala26. A helical transmembrane segment spans residues Ile27 to Ala47. Residues Leu48 to Ser74 are Extracellular-facing. The chain crosses the membrane as a helical span at residues Val75 to Gly95. Residues Arg96 to Lys98 lie on the Cytoplasmic side of the membrane. A helical transmembrane segment spans residues Ser99 to Gly119. At Gln120–Arg131 the chain is on the extracellular side. Residues Val132–Leu152 form a helical membrane-spanning segment. The Cytoplasmic segment spans residues Ala153 to Arg160. The chain crosses the membrane as a helical span at residues Leu161 to Tyr181. Residues Gly182–Leu195 are Extracellular-facing. An N-linked (GlcNAc...) asparagine glycan is attached at Asn184. Residues Ile196–Pro216 traverse the membrane as a helical segment. Topologically, residues Glu217–Arg285 are cytoplasmic. The chain crosses the membrane as a helical span at residues Phe286–Tyr306. At Tyr307–Thr327 the chain is on the extracellular side. A helical transmembrane segment spans residues Gly328–Val349. At Gly350–Arg352 the chain is on the cytoplasmic side. Residues Arg353–Ile373 form a helical membrane-spanning segment. At Lys374–Thr389 the chain is on the extracellular side. The chain crosses the membrane as a helical span at residues Ser390 to Trp410. Residues Asn411 to Ala435 lie on the Cytoplasmic side of the membrane. Residues Ala436–Met456 traverse the membrane as a helical segment. The Extracellular segment spans residues Glu457–Tyr458. Residues Gly459 to Leu479 traverse the membrane as a helical segment. Residues Pro480–Val537 are Cytoplasmic-facing. Residues Arg514–Thr531 show a composition bias toward basic and acidic residues. A disordered region spans residues Arg514–Val537.

This sequence belongs to the major facilitator superfamily. Sugar transporter (TC 2.A.1.1) family.

It localises to the membrane. In terms of biological role, MFS-type transporter; part of the qa gene cluster that mediates the catabolism of quinic acid (QA) and as such, allows the use of QA as a sole carbon source. Involved in the upatke of QA. The qa cluster encodes 3 inducible enymes (qa-2, qa-3 and qa-4) catalyzing the first three reactions in the catabolism of quinic acid to protocatechuic acid (also known as 3,4-Dihydroxybenzoic acid). The protein is MFS-type transporter qa-x of Neurospora crassa (strain ATCC 24698 / 74-OR23-1A / CBS 708.71 / DSM 1257 / FGSC 987).